Here is a 209-residue protein sequence, read N- to C-terminus: Type III pantothenate kinase (209 aa).

ATP is bound at residue 5-12 (DIGNSNAN). Residues Y68 and 72–75 (GIDR) each bind substrate. D74 (proton acceptor) is an active-site residue. D89 serves as a coordination point for K(+). An ATP-binding site is contributed by S92. T144 lines the substrate pocket.

Belongs to the type III pantothenate kinase family. Homodimer. It depends on NH4(+) as a cofactor. The cofactor is K(+).

Its subcellular location is the cytoplasm. It carries out the reaction (R)-pantothenate + ATP = (R)-4'-phosphopantothenate + ADP + H(+). Its pathway is cofactor biosynthesis; coenzyme A biosynthesis; CoA from (R)-pantothenate: step 1/5. Functionally, catalyzes the phosphorylation of pantothenate (Pan), the first step in CoA biosynthesis. This chain is Type III pantothenate kinase, found in Campylobacter jejuni (strain RM1221).